We begin with the raw amino-acid sequence, 662 residues long: Glutathione hydrolase 7 (662 aa).

Topologically, residues 1 to 106 are cytoplasmic; that stretch reads MAAENEASQE…AAECSCRQDG (106 aa). Residues Ser17, Ser72, Ser79, and Ser83 each carry the phosphoserine modification. The tract at residues 26–90 is disordered; sequence SFPRLPEDEP…DGSPLRETRK (65 aa). Positions 72-83 are enriched in low complexity; it reads SSSSEMGSQDGS. The chain crosses the membrane as a helical; Signal-anchor for type II membrane protein span at residues 107–127; that stretch reads LTVIVTACLTFATGVTVALVM. Residues 128 to 662 are Extracellular-facing; it reads QIYFGDPQIF…SLDATGASIL (535 aa). Residues Asn198, Asn267, Asn283, Asn330, Asn353, Asn394, Asn519, Asn523, and Asn586 are each glycosylated (N-linked (GlcNAc...) asparagine).

Belongs to the gamma-glutamyltransferase family. Heterodimer composed of the light and heavy chains. The active site is located in the light chain. Post-translationally, cleaved by autocatalysis into a large and a small subunit and the autocatalytic cleavage is essential to the functional activation of the enzyme.

Its subcellular location is the membrane. The enzyme catalyses an N-terminal (5-L-glutamyl)-[peptide] + an alpha-amino acid = 5-L-glutamyl amino acid + an N-terminal L-alpha-aminoacyl-[peptide]. It catalyses the reaction glutathione + H2O = L-cysteinylglycine + L-glutamate. It carries out the reaction an S-substituted glutathione + H2O = an S-substituted L-cysteinylglycine + L-glutamate. The protein operates within sulfur metabolism; glutathione metabolism. Its function is as follows. Hydrolyzes and transfers gamma-glutamyl moieties from glutathione and other gamma-glutamyl compounds to acceptors. The protein is Glutathione hydrolase 7 of Rattus norvegicus (Rat).